The primary structure comprises 356 residues: 7,8-didemethyl-8-hydroxy-5-deazariboflavin synthase (356 aa).

One can recognise a Radical SAM core domain in the interval 40–280; the sequence is ITYSKNVFIP…KDISIQVPPN (241 aa). Positions 54, 58, and 61 each coordinate [4Fe-4S] cluster.

This sequence belongs to the radical SAM superfamily. CofG family. As to quaternary structure, consists of two subunits, CofG and CofH. [4Fe-4S] cluster serves as cofactor.

The enzyme catalyses 5-amino-5-(4-hydroxybenzyl)-6-(D-ribitylimino)-5,6-dihydrouracil + S-adenosyl-L-methionine = 7,8-didemethyl-8-hydroxy-5-deazariboflavin + 5'-deoxyadenosine + L-methionine + NH4(+) + H(+). The protein operates within cofactor biosynthesis; coenzyme F0 biosynthesis. Its function is as follows. Catalyzes the radical-mediated synthesis of 7,8-didemethyl-8-hydroxy-5-deazariboflavin from 5-amino-5-(4-hydroxybenzyl)-6-(D-ribitylimino)-5,6-dihydrouracil. The protein is 7,8-didemethyl-8-hydroxy-5-deazariboflavin synthase of Methanococcus aeolicus (strain ATCC BAA-1280 / DSM 17508 / OCM 812 / Nankai-3).